A 270-amino-acid chain; its full sequence is MAHQMAAGNSLDSTCMPRIGPHVREMENCHSEKTCARIWKTVRDESTYGTDELIQVALVYKYVTRKTPEAFVLISNRLKGGKYDMNSVKKGYKAKDGLQEISNYISSLDREGKQVLACMLILSTQSIGKTVLVELLAGISGKHPMEVLPVHTNNIVMYDSDSEDEHRDLWLDEVAKQLNTLTPVLKGKYETAEEKEICGLVKQRIEDFRELEKLAAGSGREYDKRMYTKGLLKELCSILQGHQVIKLKGLTYQILVGVGEQLYQLLKSVD.

The protein resides in the virion. This chain is Matrix protein 1 (M1), found in Homo sapiens (Human).